The primary structure comprises 169 residues: Lachrymatory-factor synthase (169 aa).

Residues 1–12 (MELNPGAPAVVA) constitute a propeptide that is removed on maturation. Active-site proton donor/acceptor residues include glutamate 88 and tyrosine 102.

The protein resides in the vacuole. The enzyme catalyses (E)-prop-1-en-1-SO-peroxol = (Z)-propanethial S-oxide. It carries out the reaction (E)-alk-1-en-1-SO-peroxol = (Z)-alkanethial oxide. In terms of biological role, produces lacrymatory factor (propanthial S-oxide) from 1-propenylsulphenic acid, an unstable compound resulting from the degradation of trans-1-propenyl-L-cysteine sulphoxide (PRENCSO) by alliinase. This Allium cepa (Onion) protein is Lachrymatory-factor synthase.